We begin with the raw amino-acid sequence, 116 residues long: Aspartate 1-decarboxylase (116 aa).

Residue serine 25 is the Schiff-base intermediate with substrate; via pyruvic acid of the active site. Residue serine 25 is modified to Pyruvic acid (Ser). Threonine 57 contacts substrate. Tyrosine 58 serves as the catalytic Proton donor. 73 to 75 (GAA) contacts substrate.

Belongs to the PanD family. Heterooctamer of four alpha and four beta subunits. Pyruvate serves as cofactor. Post-translationally, is synthesized initially as an inactive proenzyme, which is activated by self-cleavage at a specific serine bond to produce a beta-subunit with a hydroxyl group at its C-terminus and an alpha-subunit with a pyruvoyl group at its N-terminus.

It is found in the cytoplasm. It catalyses the reaction L-aspartate + H(+) = beta-alanine + CO2. It participates in cofactor biosynthesis; (R)-pantothenate biosynthesis; beta-alanine from L-aspartate: step 1/1. Its function is as follows. Catalyzes the pyruvoyl-dependent decarboxylation of aspartate to produce beta-alanine. In Syntrophus aciditrophicus (strain SB), this protein is Aspartate 1-decarboxylase.